We begin with the raw amino-acid sequence, 251 residues long: tRNA pseudouridine synthase A (251 aa).

The Nucleophile role is filled by Asp56. A substrate-binding site is contributed by Tyr110.

The protein belongs to the tRNA pseudouridine synthase TruA family.

It catalyses the reaction uridine(38/39/40) in tRNA = pseudouridine(38/39/40) in tRNA. Formation of pseudouridine at positions 38, 39 and 40 in the anticodon stem and loop of transfer RNAs. The polypeptide is tRNA pseudouridine synthase A (Picrophilus torridus (strain ATCC 700027 / DSM 9790 / JCM 10055 / NBRC 100828 / KAW 2/3)).